The chain runs to 1141 residues: cGMP-inhibited 3',5'-cyclic phosphodiesterase 3A (1141 aa).

The tract at residues 1–42 (MAVRGEAAQDLAKPGLGGASPARVARGNHRHRGESSPSPRGS) is disordered. A helical transmembrane segment spans residues 62–82 (SALCAGSLSVLLALLVRLVGG). Residues 90 to 111 (KSQEAAAEEEEEEGARGGVFPG) form a disordered region. The next 5 membrane-spanning stretches (helical) occupy residues 127 to 147 (LQPA…GLCL), 157 to 177 (AVAL…SLGV), 182 to 202 (LLSL…TWLV), 207 to 227 (LGVL…VSLE), and 229 to 249 (FKVA…LLLA). The residue at position 310 (S310) is a Phosphoserine. Residues 433 to 445 (RVSSTWTTTTSAT) show a composition bias toward low complexity. Residues 433–483 (RVSSTWTTTTSATGLPTLEPAPVRRDRSASIKPHEAPSPSAVNPDSWNAPG) form a disordered region. Residues 454 to 467 (PVRRDRSASIKPHE) are compositionally biased toward basic and acidic residues. A compositionally biased stretch (polar residues) spans 472-483 (SAVNPDSWNAPG). 4 positions are modified to phosphoserine: S492, S520, S524, and S533. A disordered region spans residues 505–654 (VKAKKQNRPG…CQREPQRKAS (150 aa)). A compositionally biased stretch (pro residues) spans 522–532 (VPSPSSSPPQG). The segment covering 533-544 (SPASSPVSNSAS) has biased composition (low complexity). The segment covering 618–637 (TSQVTSDYETNNNSDSSDIL) has biased composition (polar residues). Residues 669-1141 (KPILAPEPLV…EETLAPQPDL (473 aa)) are interaction with SLFN12. Residues 674–1093 (PEPLVMDNLD…MMWKKVIEEE (420 aa)) enclose the PDEase domain. H752 serves as the catalytic Proton donor. H752 lines the AMP pocket. Mn(2+) is bound by residues H756, H836, D837, and D950. 3 residues coordinate AMP: D837, D950, and Q1001. D837 provides a ligand contact to Mg(2+). Disordered stretches follow at residues 1024–1060 (GKWV…SSIA) and 1120–1141 (KEEE…QPDL). Residues 1029–1046 (DSDDSGDTDDPEEEEEEA) are compositionally biased toward acidic residues. S1033 is modified (phosphoserine). Residue T1036 is modified to Phosphothreonine. Residue K1120 forms a Glycyl lysine isopeptide (Lys-Gly) (interchain with G-Cter in SUMO2) linkage.

Belongs to the cyclic nucleotide phosphodiesterase family. PDE3 subfamily. The cofactor is Mn(2+). It depends on Mg(2+) as a cofactor.

The protein resides in the membrane. It localises to the cytoplasm. The protein localises to the cytosol. It carries out the reaction a nucleoside 3',5'-cyclic phosphate + H2O = a nucleoside 5'-phosphate + H(+). The enzyme catalyses 3',5'-cyclic AMP + H2O = AMP + H(+). The catalysed reaction is 3',5'-cyclic GMP + H2O = GMP + H(+). It catalyses the reaction 3',5'-cyclic UMP + H2O = UMP + H(+). Inhibited by cGMP. Functionally, cyclic nucleotide phosphodiesterase with specificity for the second messengers cAMP and cGMP, which are key regulators of many important physiological processes. Also has activity toward cUMP. Independently of its catalytic activity it is part of an E2/17beta-estradiol-induced pro-apoptotic signaling pathway. E2 stabilizes the PDE3A/SLFN12 complex in the cytosol, promoting the dephosphorylation of SLFN12 and activating its pro-apoptotic ribosomal RNA/rRNA ribonuclease activity. This apoptotic pathway might be relevant in tissues with high concentration of E2 and be for instance involved in placenta remodeling. This is cGMP-inhibited 3',5'-cyclic phosphodiesterase 3A from Mus musculus (Mouse).